Reading from the N-terminus, the 125-residue chain is Small ribosomal subunit protein uS12 (125 aa).

Aspartate 89 is subject to 3-methylthioaspartic acid. Positions 105–125 are disordered; it reads AGVKDRKQARSKYGAKRPKAA. Positions 113–125 are enriched in basic residues; that stretch reads ARSKYGAKRPKAA.

The protein belongs to the universal ribosomal protein uS12 family. As to quaternary structure, part of the 30S ribosomal subunit. Contacts proteins S8 and S17. May interact with IF1 in the 30S initiation complex.

With S4 and S5 plays an important role in translational accuracy. In terms of biological role, interacts with and stabilizes bases of the 16S rRNA that are involved in tRNA selection in the A site and with the mRNA backbone. Located at the interface of the 30S and 50S subunits, it traverses the body of the 30S subunit contacting proteins on the other side and probably holding the rRNA structure together. The combined cluster of proteins S8, S12 and S17 appears to hold together the shoulder and platform of the 30S subunit. This is Small ribosomal subunit protein uS12 from Methylobacillus flagellatus (strain ATCC 51484 / DSM 6875 / VKM B-1610 / KT).